A 417-amino-acid chain; its full sequence is Caveolae-associated protein 2 (417 aa).

The segment at 1-42 (MGEDAAQAEKFQHPNTDMLQEKPSNPSPMPSSTPSPSLNLGS) is disordered. Residue glycine 2 is modified to N-acetylglycine. Residues 2–168 (GEDAAQAEKF…IFQEESEIPA (167 aa)) form an interaction with CAVIN1 region. Phosphoserine is present on residues serine 27, serine 35, serine 37, and serine 51. Coiled coils occupy residues 61 to 87 (LLDK…INLE) and 126 to 267 (RAVR…VERR). The tract at residues 62–100 (LDKLVNMLDAVRENQHNMEQRQINLEGSVKGIQNDLTKL) is leucine-zipper. The residue at position 195 (threonine 195) is a Phosphothreonine. Disordered regions lie at residues 198–242 (NVDL…DSLK) and 256–381 (KLGT…ALQQ). 3 positions are modified to phosphoserine: serine 202, serine 203, and serine 217. Acidic residues predominate over residues 202-218 (SSDDELPGDEEALEDSA). A compositionally biased stretch (basic and acidic residues) spans 219–242 (EEKMEESRAEKIKRSSLKKVDSLK). Residues 274-286 (LTPNHQKASSGKS) are compositionally biased toward polar residues. Residues serine 282, serine 283, serine 286, serine 287, serine 292, and serine 295 each carry the phosphoserine modification. Over residues 302–320 (REGESSAENETKLEEQVQD) the composition is skewed to basic and acidic residues. Phosphoserine occurs at positions 326, 335, 358, and 362. A compositionally biased stretch (polar residues) spans 354-365 (RGNNSGVGSNAD). Threonine 367 carries the phosphothreonine modification. Residues 367–376 (TIEEDEEEES) show a composition bias toward acidic residues. Position 387 is a phosphotyrosine (tyrosine 387). Residues serine 389 and serine 395 each carry the phosphoserine modification.

This sequence belongs to the CAVIN family. Component of the CAVIN complex composed of CAVIN1, CAVIN2, CAVIN3 and CAVIN. Interacts with CAVIN4; this augments the transactivation of NPPA by CAVIN4. Binds to PRKCA in the presence of phosphatidylserine. Interacts with CAVIN1 and CAV3. The N-terminus is blocked. Post-translationally, phosphorylated on Ser residues.

It localises to the cytoplasm. It is found in the cytosol. Its subcellular location is the membrane. The protein localises to the caveola. In terms of biological role, plays an important role in caveolar biogenesis and morphology. Regulates caveolae morphology by inducing membrane curvature within caveolae. Plays a role in caveola formation in a tissue-specific manner. Required for the formation of caveolae in the lung and fat endothelia but not in the heart endothelia. Negatively regulates the size or stability of CAVIN complexes in the lung endothelial cells. May play a role in targeting PRKCA to caveolae. This is Caveolae-associated protein 2 from Rattus norvegicus (Rat).